The primary structure comprises 167 residues: UPF0114 protein Tola_1474 (167 aa).

4 consecutive transmembrane segments (helical) span residues 15–35 (IMAP…IKFF), 53–73 (LILI…IVMV), 109–129 (VAAS…MNTE), and 136–156 (IKWY…MGYL).

This sequence belongs to the UPF0114 family.

Its subcellular location is the cell membrane. This Tolumonas auensis (strain DSM 9187 / NBRC 110442 / TA 4) protein is UPF0114 protein Tola_1474.